A 274-amino-acid polypeptide reads, in one-letter code: Large ribosomal subunit protein uL2 (274 aa).

2 disordered regions span residues 28–55 (APHAPLLEKKSKSGGRNNNGRITTRHVG) and 224–274 (VAMN…RRRK).

It belongs to the universal ribosomal protein uL2 family. As to quaternary structure, part of the 50S ribosomal subunit. Forms a bridge to the 30S subunit in the 70S ribosome.

Its function is as follows. One of the primary rRNA binding proteins. Required for association of the 30S and 50S subunits to form the 70S ribosome, for tRNA binding and peptide bond formation. It has been suggested to have peptidyltransferase activity; this is somewhat controversial. Makes several contacts with the 16S rRNA in the 70S ribosome. This Pseudomonas putida (strain GB-1) protein is Large ribosomal subunit protein uL2.